We begin with the raw amino-acid sequence, 127 residues long: Small ribosomal subunit protein bS16 (127 aa).

The tract at residues 80-127 (GLKKRPTRNNPHKGEPGKKAQERIAAAKQAAEEAAAAKTESAPISEEV) is disordered. A compositionally biased stretch (basic residues) spans 81-90 (LKKRPTRNNP). Positions 91–101 (HKGEPGKKAQE) are enriched in basic and acidic residues. Residues 102 to 121 (RIAAAKQAAEEAAAAKTESA) are compositionally biased toward low complexity.

This sequence belongs to the bacterial ribosomal protein bS16 family.

The chain is Small ribosomal subunit protein bS16 from Bartonella henselae (strain ATCC 49882 / DSM 28221 / CCUG 30454 / Houston 1) (Rochalimaea henselae).